Reading from the N-terminus, the 389-residue chain is MRAIIIVLDSAGIGEMPDAEKYGDKGSNTFGNTAKAVGGLHMPNSQRLGLGNLTDILGVPPTDHALGAYGRMLEKSPGKDTTTGHWEFMGIILEKPFDMFPNGFPPEIIEPFEKETGRKVIGNKPASGTEIIKELGREHEKTGALIVYTSADSVFQIAAHEEIVPVPELYKYCEIARKILNESGYKVARVIARPFIGEWPNYTRTPRRHDYSLPPEGKIALEYLVENGVPVYAVGKINDIYDGHGITEYVKTKDNMDGVDKTLDYIRKVDKGLIFTNLVDFDMKYGHRNNPEGYAKALEEFDARLPEIIGTMRPDDVLFITADHGCDPTTPSTDHSREKVPLLVYGRHVKENVFLGERETFADLGQTILDLFGVEPMENGTSFKKEILD.

Aspartate 9, aspartate 282, histidine 287, aspartate 323, histidine 324, and histidine 335 together coordinate Mn(2+).

Belongs to the phosphopentomutase family. Mn(2+) serves as cofactor.

It localises to the cytoplasm. It catalyses the reaction 2-deoxy-alpha-D-ribose 1-phosphate = 2-deoxy-D-ribose 5-phosphate. The enzyme catalyses alpha-D-ribose 1-phosphate = D-ribose 5-phosphate. It functions in the pathway carbohydrate degradation; 2-deoxy-D-ribose 1-phosphate degradation; D-glyceraldehyde 3-phosphate and acetaldehyde from 2-deoxy-alpha-D-ribose 1-phosphate: step 1/2. In terms of biological role, isomerase that catalyzes the conversion of deoxy-ribose 1-phosphate (dRib-1-P) and ribose 1-phosphate (Rib-1-P) to deoxy-ribose 5-phosphate (dRib-5-P) and ribose 5-phosphate (Rib-5-P), respectively. This chain is Phosphopentomutase, found in Kosmotoga olearia (strain ATCC BAA-1733 / DSM 21960 / TBF 19.5.1).